We begin with the raw amino-acid sequence, 545 residues long: Chaperonin GroEL (545 aa).

ATP contacts are provided by residues 30–33 (TLGP), Lys51, 87–91 (DGTTT), Gly415, and Asp495.

This sequence belongs to the chaperonin (HSP60) family. As to quaternary structure, forms a cylinder of 14 subunits composed of two heptameric rings stacked back-to-back. Interacts with the co-chaperonin GroES.

The protein resides in the cytoplasm. The enzyme catalyses ATP + H2O + a folded polypeptide = ADP + phosphate + an unfolded polypeptide.. Functionally, together with its co-chaperonin GroES, plays an essential role in assisting protein folding. The GroEL-GroES system forms a nano-cage that allows encapsulation of the non-native substrate proteins and provides a physical environment optimized to promote and accelerate protein folding. The protein is Chaperonin GroEL of Shewanella amazonensis (strain ATCC BAA-1098 / SB2B).